A 508-amino-acid polypeptide reads, in one-letter code: Cytochrome P450 monooxygenase tenA (508 aa).

Residues 8–24 (VSLPYLILSACLSVILL) form a helical membrane-spanning segment. Residue Cys-456 participates in heme binding.

The protein belongs to the cytochrome P450 family. Heme serves as cofactor.

The protein resides in the membrane. The protein operates within secondary metabolite biosynthesis. Cytochrome P450 monooxygenase; part of the gene cluster that mediates the biosynthesis of tenellin-type 2-pyridones, iron-chelating compounds involved in iron stress tolerance, competition with the natural competitor fungus Metarhizium robertsii and insect hosts infection. TenA catalyzes an oxidative ring expansion of pretenellin A and 14-hydropretellenin A to form the 2-pyridone core, leading to the production of pretenellin B and pyridovericin, respectively. The pathway begins with the assembly of the polyketide-amino acid backbone by the hybrid PKS-NRPS tenS with the help of the enoyl reductase tenC. These enzymes catalyze the synthesis of the pyrrolidine-2-dione intermediates pretellinin A, 11-hydropretellenin A, 12-hydropretellenin A, 13-hydropretellenin A, 14-hydropretellenin A, 12-oxopretellenin A and prototellinin D. The cytochrome P450 monooxygenase tenA then catalyzes an oxidative ring expansion of pretenellin A and 14-hydropretellenin A to form the 2-pyridone core, leading to pretenellin B and pyridovericin, respectively. The cytochrome P450 monooxygenase tenB is then required for the selective N-hydroxylation of the 2-pyridone nitrogen of yield tellinin and 15-hydroxytellenin (15-HT), respectively. The UDP-glucosyltransferase GT1 and the methyltransferase MT1, located outside the tenS gene cluster, contribute to the stepwise glycosylation and methylation of 15-HT to obtain the glycoside pyridovericin-N-O-(4-O-methyl-beta-D-glucopyranoside) (PMGP). Additional related compounds such as 1-O-methyl-15-HT, (8Z)-1-O-methyl-15-HT, and O-methyltenellin A are also produced but the enzymes involved in their biosynthesis have still to be determined. This chain is Cytochrome P450 monooxygenase tenA, found in Beauveria bassiana (White muscardine disease fungus).